Consider the following 138-residue polypeptide: Basic phospholipase A2 Cll-N6 (138 aa).

Positions 1–16 are cleaved as a signal peptide; that stretch reads MRTFWIVAVLLVGVEG. Intrachain disulfides connect Cys42–Cys131, Cys44–Cys60, Cys59–Cys111, Cys65–Cys138, Cys66–Cys104, Cys73–Cys97, and Cys91–Cys102. Tyr43, Gly45, and Gly47 together coordinate Ca(2+). The active site involves His63. Asp64 provides a ligand contact to Ca(2+). Residue Asp105 is part of the active site.

As to quaternary structure, monomer. It depends on Ca(2+) as a cofactor. In terms of tissue distribution, expressed by the venom gland.

The protein resides in the secreted. It catalyses the reaction a 1,2-diacyl-sn-glycero-3-phosphocholine + H2O = a 1-acyl-sn-glycero-3-phosphocholine + a fatty acid + H(+). Functionally, snake venom phospholipase A2 (PLA2) that shows myotoxic activities. PLA2 catalyzes the calcium-dependent hydrolysis of the 2-acyl groups in 3-sn-phosphoglycerides. The protein is Basic phospholipase A2 Cll-N6 of Crotalus lepidus lepidus (Mottled rock rattlesnake).